A 213-amino-acid polypeptide reads, in one-letter code: Ribulose-phosphate 3-epimerase (213 aa).

Substrate is bound at residue S9. A divalent metal cation contacts are provided by H34, D36, and H66. The active-site Proton acceptor is D36. Substrate is bound by residues H66, 139–142 (GFGG), 166–168 (DGG), and 186–187 (GS). D166 lines the a divalent metal cation pocket. The active-site Proton donor is the D166.

Belongs to the ribulose-phosphate 3-epimerase family. Requires Co(2+) as cofactor. Fe(2+) serves as cofactor. The cofactor is Mn(2+). Zn(2+) is required as a cofactor.

The enzyme catalyses D-ribulose 5-phosphate = D-xylulose 5-phosphate. The protein operates within carbohydrate degradation; pentose phosphate pathway; D-xylulose 5-phosphate from D-ribulose 5-phosphate (non-oxidative stage): step 1/1. Its function is as follows. Catalyzes the reversible epimerization of D-ribulose 5-phosphate to D-xylulose 5-phosphate. In Encephalitozoon cuniculi (strain GB-M1) (Microsporidian parasite), this protein is Ribulose-phosphate 3-epimerase (RPE1).